Consider the following 190-residue polypeptide: uncharacterized protein (190 aa).

The N-terminal stretch at 1 to 18 (MKLVHMASGLAVAIALAA) is a signal peptide. Residue Cys19 is the site of N-palmitoyl cysteine attachment. The S-diacylglycerol cysteine moiety is linked to residue Cys19. The segment covering 162-182 (ASGGATTTVPSTSPTQVNPSS) has biased composition (low complexity). A disordered region spans residues 162–190 (ASGGATTTVPSTSPTQVNPSSAVPAPTQY).

The protein localises to the cell membrane. This is an uncharacterized protein from Escherichia coli (strain K12).